The following is a 345-amino-acid chain: L-threonine 3-dehydrogenase (345 aa).

Cys39 lines the Zn(2+) pocket. Catalysis depends on charge relay system residues Thr41 and His44. Zn(2+) is bound by residues His64, Glu65, Cys94, Cys97, Cys100, and Cys108. NAD(+) is bound by residues Ile176, Asp196, Arg201, 263–265 (LGI), and 287–288 (VY).

It belongs to the zinc-containing alcohol dehydrogenase family. As to quaternary structure, homotetramer. The cofactor is Zn(2+).

The protein resides in the cytoplasm. The enzyme catalyses L-threonine + NAD(+) = (2S)-2-amino-3-oxobutanoate + NADH + H(+). It participates in amino-acid degradation; L-threonine degradation via oxydo-reductase pathway; glycine from L-threonine: step 1/2. Catalyzes the NAD(+)-dependent oxidation of L-threonine to 2-amino-3-ketobutyrate. This Anaeromyxobacter dehalogenans (strain 2CP-C) protein is L-threonine 3-dehydrogenase.